The chain runs to 92 residues: UPF0250 protein VC0395_A0469/VC395_0960 (92 aa).

The protein belongs to the UPF0250 family.

In Vibrio cholerae serotype O1 (strain ATCC 39541 / Classical Ogawa 395 / O395), this protein is UPF0250 protein VC0395_A0469/VC395_0960.